The chain runs to 107 residues: Large ribosomal subunit protein bL21 (107 aa).

The protein belongs to the bacterial ribosomal protein bL21 family. As to quaternary structure, part of the 50S ribosomal subunit. Contacts protein L20.

In terms of biological role, this protein binds to 23S rRNA in the presence of protein L20. This chain is Large ribosomal subunit protein bL21, found in Chlamydia muridarum (strain MoPn / Nigg).